A 1134-amino-acid polypeptide reads, in one-letter code: Isoleucine--tRNA ligase (1134 aa).

Residues 52–62 carry the 'HIGH' region motif; the sequence is PFANGLPHYGH. Positions 656-660 match the 'KMSKS' region motif; that stretch reads KLSKR. Position 659 (Lys-659) interacts with ATP.

This sequence belongs to the class-I aminoacyl-tRNA synthetase family. IleS type 2 subfamily. As to quaternary structure, monomer. Zn(2+) serves as cofactor.

It localises to the cytoplasm. The catalysed reaction is tRNA(Ile) + L-isoleucine + ATP = L-isoleucyl-tRNA(Ile) + AMP + diphosphate. Catalyzes the attachment of isoleucine to tRNA(Ile). As IleRS can inadvertently accommodate and process structurally similar amino acids such as valine, to avoid such errors it has two additional distinct tRNA(Ile)-dependent editing activities. One activity is designated as 'pretransfer' editing and involves the hydrolysis of activated Val-AMP. The other activity is designated 'posttransfer' editing and involves deacylation of mischarged Val-tRNA(Ile). The sequence is that of Isoleucine--tRNA ligase from Wolbachia sp. subsp. Brugia malayi (strain TRS).